The following is a 230-amino-acid chain: 5'-methylthioadenosine/S-adenosylhomocysteine nucleosidase (230 aa).

The Proton acceptor role is filled by Glu-12. Substrate is bound by residues Gly-78, Met-153, and 174 to 175 (ME). Asp-198 serves as the catalytic Proton donor.

It belongs to the PNP/UDP phosphorylase family. MtnN subfamily.

It carries out the reaction S-adenosyl-L-homocysteine + H2O = S-(5-deoxy-D-ribos-5-yl)-L-homocysteine + adenine. The catalysed reaction is S-methyl-5'-thioadenosine + H2O = 5-(methylsulfanyl)-D-ribose + adenine. It catalyses the reaction 5'-deoxyadenosine + H2O = 5-deoxy-D-ribose + adenine. The protein operates within amino-acid biosynthesis; L-methionine biosynthesis via salvage pathway; S-methyl-5-thio-alpha-D-ribose 1-phosphate from S-methyl-5'-thioadenosine (hydrolase route): step 1/2. In terms of biological role, catalyzes the irreversible cleavage of the glycosidic bond in both 5'-methylthioadenosine (MTA) and S-adenosylhomocysteine (SAH/AdoHcy) to adenine and the corresponding thioribose, 5'-methylthioribose and S-ribosylhomocysteine, respectively. Also cleaves 5'-deoxyadenosine, a toxic by-product of radical S-adenosylmethionine (SAM) enzymes, into 5-deoxyribose and adenine. The chain is 5'-methylthioadenosine/S-adenosylhomocysteine nucleosidase from Aeromonas salmonicida (strain A449).